A 727-amino-acid chain; its full sequence is Glycerol-3-phosphate dehydrogenase, mitochondrial (727 aa).

A mitochondrion-targeting transit peptide spans 1-42 (MAFQKAVKGTILVGGGALATVLGLSQFAHYRRKQMNLAYVKA). FAD is bound at residue 71–99 (DILVIGGGATGSGCALDAVTRGLKTALVE). Tyrosine 601 is subject to Phosphotyrosine. 2 consecutive EF-hand domains span residues 623-658 (SDID…INVQ) and 659-694 (MDEN…IQKG). Ca(2+) contacts are provided by aspartate 672, asparagine 674, asparagine 676, glutamine 678, and glutamate 683.

This sequence belongs to the FAD-dependent glycerol-3-phosphate dehydrogenase family. The cofactor is FAD.

It is found in the mitochondrion. It catalyses the reaction a quinone + sn-glycerol 3-phosphate = dihydroxyacetone phosphate + a quinol. It functions in the pathway polyol metabolism; glycerol degradation via glycerol kinase pathway; glycerone phosphate from sn-glycerol 3-phosphate (anaerobic route): step 1/1. Its activity is regulated as follows. Calcium-binding enhance the activity of the enzyme. Functionally, calcium-responsive mitochondrial glycerol-3-phosphate dehydrogenase which seems to be a key component of the pancreatic beta-cell glucose-sensing device. The protein is Glycerol-3-phosphate dehydrogenase, mitochondrial of Homo sapiens (Human).